Here is a 503-residue protein sequence, read N- to C-terminus: MAAQSYYNGAYNSPPAYEQHDHTSDQFNRVSPRPSPSPVAYNNAPYYQSDDPHDPNSLRYSQQSIGSDNGAYVAGGRINEHDQYAENIPLKSANPYGNDHPPQPWMQQPTHYAPDPGMMEPQVPMRQKKKGFFQKKIAYVTYILTIAQIIVFIVELVKMGQLTGSPIQTKPQFNPMVGPSAYVQINMGARYTPCMKNVPGVQNATQQVLFPCPNATTTDSDCSLSELCGFDGVPNPHPGGSLDDKPAPDQWFRFIIPMFLHSGFVHIGFNLLVQMTMGADMERMIGWWRYGLVYLSSGIWGFVLGGNYAGQGEASCGCSGALFGILALFVLDLLYGWNDRQNPWVELIIMVLGIAVSFVLGLLPGLDNFSHLGGFTMGLALGLCVMRSPNALRERIGLARSPYVAMSGGVAAENADPDQNKTSTGSNIGGLGKFNPKGFFAGRKPLWWAWWLVRLGALVAVLIGFILLIVNFYKYPSSNCSWCYRFSCLPVNGWCDQGNLFSR.

Over residues 1-11 (MAAQSYYNGAY) the composition is skewed to polar residues. A disordered region spans residues 1–66 (MAAQSYYNGA…SLRYSQQSIG (66 aa)). The Cytoplasmic portion of the chain corresponds to 1-136 (MAAQSYYNGA…QKKKGFFQKK (136 aa)). Residues 137–157 (IAYVTYILTIAQIIVFIVELV) traverse the membrane as a helical segment. Over 158-253 (KMGQLTGSPI…DKPAPDQWFR (96 aa)) the chain is Extracellular. A helical membrane pass occupies residues 254–274 (FIIPMFLHSGFVHIGFNLLVQ). At 275–283 (MTMGADMER) the chain is on the cytoplasmic side. The helical transmembrane segment at 284–304 (MIGWWRYGLVYLSSGIWGFVL) threads the bilayer. The Extracellular segment spans residues 305–316 (GGNYAGQGEASC). Residues 317–337 (GCSGALFGILALFVLDLLYGW) form a helical membrane-spanning segment. Ser-319 serves as the catalytic Nucleophile. The Cytoplasmic portion of the chain corresponds to 338–342 (NDRQN). Residues 343-363 (PWVELIIMVLGIAVSFVLGLL) traverse the membrane as a helical segment. The Extracellular portion of the chain corresponds to 364 to 365 (PG). The helical transmembrane segment at 366–386 (LDNFSHLGGFTMGLALGLCVM) threads the bilayer. The active site involves His-371. Topologically, residues 387 to 449 (RSPNALRERI…FAGRKPLWWA (63 aa)) are cytoplasmic. Residues 450–470 (WWLVRLGALVAVLIGFILLIV) form a helical membrane-spanning segment. The Extracellular portion of the chain corresponds to 471 to 503 (NFYKYPSSNCSWCYRFSCLPVNGWCDQGNLFSR).

Belongs to the peptidase S54 family.

It localises to the membrane. It carries out the reaction Cleaves type-1 transmembrane domains using a catalytic dyad composed of serine and histidine that are contributed by different transmembrane domains.. Its function is as follows. Probable rhomboid-type serine protease that catalyzes intramembrane proteolysis. The sequence is that of Rhomboid-type serine protease 2 from Emericella nidulans (strain FGSC A4 / ATCC 38163 / CBS 112.46 / NRRL 194 / M139) (Aspergillus nidulans).